Reading from the N-terminus, the 78-residue chain is MSRVCQVTGKGPVTGNNISHAHNKTRRRFLPNLQHHRFWVESEKRFVRLRVSAKGMRIIDKRGIEAVLADLRARGEKF.

This sequence belongs to the bacterial ribosomal protein bL28 family.

The sequence is that of Large ribosomal subunit protein bL28 from Pseudomonas aeruginosa (strain LESB58).